The following is a 115-amino-acid chain: Large ribosomal subunit protein bL20 (115 aa).

Belongs to the bacterial ribosomal protein bL20 family.

Functionally, binds directly to 23S ribosomal RNA and is necessary for the in vitro assembly process of the 50S ribosomal subunit. It is not involved in the protein synthesizing functions of that subunit. The polypeptide is Large ribosomal subunit protein bL20 (Microcystis aeruginosa (strain NIES-843 / IAM M-2473)).